Reading from the N-terminus, the 273-residue chain is Protein OPG070 (273 aa).

The next 2 helical transmembrane spans lie at 123 to 143 (NEFI…LFWF) and 238 to 260 (FLLF…EYLM).

This sequence belongs to the orthopoxvirus OPG070 family. Post-translationally, phosphorylated by OPG054/F10L kinase in vitro.

Its subcellular location is the virion. It localises to the host endoplasmic reticulum membrane. The protein resides in the host cytoplasm. May play a role in the biogenesis of the viral factories by recruiting and wrapping DNA replication sites in endoplasmic reticulum derived membranes. Later in infection, phosphorylation by the late viral kinase OPG054/F10L might decrease DNA-binding ability and trigger ER membranes disassembly. Binds DNA in vitro. In Vaccinia virus (strain Western Reserve) (VACV), this protein is Protein OPG070 (OPG070).